A 588-amino-acid polypeptide reads, in one-letter code: Aspartate--tRNA ligase (588 aa).

Residue Glu172 coordinates L-aspartate. The aspartate stretch occupies residues 196 to 199 (QLFK). Arg218 is a binding site for L-aspartate. ATP is bound by residues 218–220 (RDE) and Gln227. His449 lines the L-aspartate pocket. An ATP-binding site is contributed by Glu483. Arg490 is a binding site for L-aspartate. 535-538 (GLDR) provides a ligand contact to ATP.

This sequence belongs to the class-II aminoacyl-tRNA synthetase family. Type 1 subfamily. As to quaternary structure, homodimer.

Its subcellular location is the cytoplasm. The enzyme catalyses tRNA(Asp) + L-aspartate + ATP = L-aspartyl-tRNA(Asp) + AMP + diphosphate. Its function is as follows. Catalyzes the attachment of L-aspartate to tRNA(Asp) in a two-step reaction: L-aspartate is first activated by ATP to form Asp-AMP and then transferred to the acceptor end of tRNA(Asp). The chain is Aspartate--tRNA ligase from Pasteurella multocida (strain Pm70).